The following is a 158-amino-acid chain: Large ribosomal subunit protein uL15 (158 aa).

Basic and acidic residues predominate over residues 1–13; it reads MKLNEIKDNEGST. The disordered stretch occupies residues 1-45; it reads MKLNEIKDNEGSTHSRKRLGRGIGSGSGKTGGRGVKGQKSRSGVA. Over residues 21 to 35 the composition is skewed to gly residues; the sequence is RGIGSGSGKTGGRGV.

It belongs to the universal ribosomal protein uL15 family. In terms of assembly, part of the 50S ribosomal subunit.

Binds to the 23S rRNA. The chain is Large ribosomal subunit protein uL15 from Rhizobium leguminosarum bv. trifolii (strain WSM2304).